A 114-amino-acid polypeptide reads, in one-letter code: MAFQQHGNQEVRNRKILQGLEEKKRQMMNQQQGGGAGPLPGPSHVARPPTDAGNTSASRIHEPIVRYPNQTHQLAISQRQALEHAHSVSPGFYITQDSMYGNLILPVIPRVESE.

The segment covering 1 to 10 (MAFQQHGNQE) has biased composition (polar residues). The tract at residues 1-61 (MAFQQHGNQE…AGNTSASRIH (61 aa)) is disordered.

Belongs to the SOSS-C family.

This is SOSS complex subunit C homolog from Nematostella vectensis (Starlet sea anemone).